Consider the following 327-residue polypeptide: Interleukin-12 subunit beta (327 aa).

An N-terminal signal peptide occupies residues 1-22 (MCHQKLTISWFAVVLLASPLMA). Residues 23–106 (IWELEKDVYV…LSHSRLLLHK (84 aa)) form the Ig-like C2-type domain. The cysteines at positions 50 and 90 are disulfide-linked. 4 N-linked (GlcNAc...) asparagine glycosylation sites follow: Asn125, Asn135, Asn223, and Asn315. A Fibronectin type-III domain is found at 238 to 327 (PPKNLQLKPL…WSRWVSVPCS (90 aa)).

The protein belongs to the IL-12B family. Heterodimer with IL12A; disulfide-linked. The heterodimer is known as interleukin IL-12. Heterodimer with IL23A; disulfide-linked. The heterodimer is known as interleukin IL-23. Also secreted as a monomer. Interacts with NBR1; this interaction promotes IL-12 secretion.

The protein resides in the secreted. Its function is as follows. Cytokine that can act as a growth factor for activated T and NK cells, enhance the lytic activity of NK/lymphokine-activated killer cells, and stimulate the production of IFN-gamma by resting PBMC. In terms of biological role, associates with IL23A to form the IL-23 interleukin, a heterodimeric cytokine which functions in innate and adaptive immunity. IL-23 may constitute with IL-17 an acute response to infection in peripheral tissues. IL-23 binds to a heterodimeric receptor complex composed of IL12RB1 and IL23R, activates the Jak-Stat signaling cascade, stimulates memory rather than naive T-cells and promotes production of pro-inflammatory cytokines. IL-23 induces autoimmune inflammation and thus may be responsible for autoimmune inflammatory diseases and may be important for tumorigenesis. The sequence is that of Interleukin-12 subunit beta (IL12B) from Mesocricetus auratus (Golden hamster).